A 171-amino-acid polypeptide reads, in one-letter code: 3-hydroxydecanoyl-[acyl-carrier-protein] dehydratase (171 aa).

His-70 is a catalytic residue.

This sequence belongs to the thioester dehydratase family. FabA subfamily. In terms of assembly, homodimer.

The protein localises to the cytoplasm. The enzyme catalyses a (3R)-hydroxyacyl-[ACP] = a (2E)-enoyl-[ACP] + H2O. It carries out the reaction (3R)-hydroxydecanoyl-[ACP] = (2E)-decenoyl-[ACP] + H2O. The catalysed reaction is (2E)-decenoyl-[ACP] = (3Z)-decenoyl-[ACP]. It participates in lipid metabolism; fatty acid biosynthesis. In terms of biological role, necessary for the introduction of cis unsaturation into fatty acids. Catalyzes the dehydration of (3R)-3-hydroxydecanoyl-ACP to E-(2)-decenoyl-ACP and then its isomerization to Z-(3)-decenoyl-ACP. Can catalyze the dehydratase reaction for beta-hydroxyacyl-ACPs with saturated chain lengths up to 16:0, being most active on intermediate chain length. This chain is 3-hydroxydecanoyl-[acyl-carrier-protein] dehydratase, found in Hydrogenovibrio crunogenus (strain DSM 25203 / XCL-2) (Thiomicrospira crunogena).